The sequence spans 1770 residues: Transposon Ty2-GR1 Gag-Pol polyprotein (1770 aa).

Polar residues-rich tracts occupy residues 1–11, 19–39, and 49–60; these read MESQQLHQNPH, ASVTSKEVPSNQDPLAVSASN, and KVNSQQETTPGT. Disordered stretches follow at residues 1 to 86 and 360 to 453; these read MESQ…GQYQ and HSEY…LPDH. The segment at 295–397 is RNA-binding; that stretch reads ENNINVSDRL…SSKPRAAKAH (103 aa). The segment covering 369-381 has biased composition (low complexity); the sequence is TSPNTTNTKVTTR. Over residues 399 to 408 the composition is skewed to polar residues; it reads IATSSKFSRV. The active-site For protease activity; shared with dimeric partner is Asp-457. Residues 579 to 636 form an integrase-type zinc finger-like region; the sequence is NVNKSKSVNKYPYPLIHRMLGHANFRSIQKSLKKNAVTYLKESDIEWSNASTYQCPDC. In terms of domain architecture, Integrase catalytic spans 656–831; the sequence is ESYEPFQYLH…AGLDITTILP (176 aa). Positions 667 and 732 each coordinate Mg(2+). 4 disordered regions span residues 1004–1034, 1059–1135, 1146–1165, and 1170–1205; these read MGGTVESDTTSPRHSSTFTARNQNRPGSTNE, TEEP…KSSK, LPLPDLTHKSPTDTSDVSKD, and HSRQTNSSLGGMDDSNVLTTTKSKKRSLEDNETEIE. 2 stretches are compositionally biased toward polar residues: residues 1009–1034 and 1065–1082; these read ESDTTSPRHSSTFTARNQNRPGSTNE and QRNSDTNIKYRTTNSTPS. The segment covering 1151–1165 has biased composition (basic and acidic residues); that stretch reads LTHKSPTDTSDVSKD. Residues 1193-1227 carry the Bipartite nuclear localization signal motif; the sequence is KKRSLEDNETEIEVSRDTWNNKNMRSLEPPRSKKR. A Reverse transcriptase Ty1/copia-type domain is found at 1353–1491; the sequence is NDYYITQLDI…DILGLEIKYQ (139 aa). Mg(2+) is bound by residues Asp-1361, Asp-1442, Asp-1443, Asp-1625, Glu-1667, and Asp-1700. An RNase H Ty1/copia-type domain is found at 1625 to 1767; that stretch reads DASYGNQPYY…IKTFKLLTNK (143 aa).

The capsid protein forms a homotrimer, from which the VLPs are assembled. The protease is a homodimer, whose active site consists of two apposed aspartic acid residues. Initially, virus-like particles (VLPs) are composed of the structural unprocessed proteins Gag and Gag-Pol, and also contain the host initiator methionine tRNA (tRNA(i)-Met) which serves as a primer for minus-strand DNA synthesis, and a dimer of genomic Ty RNA. Processing of the polyproteins occurs within the particle and proceeds by an ordered pathway, called maturation. First, the protease (PR) is released by autocatalytic cleavage of the Gag-Pol polyprotein, and this cleavage is a prerequisite for subsequent processing at the remaining sites to release the mature structural and catalytic proteins. Maturation takes place prior to the RT reaction and is required to produce transposition-competent VLPs.

The protein localises to the cytoplasm. Its subcellular location is the nucleus. It carries out the reaction DNA(n) + a 2'-deoxyribonucleoside 5'-triphosphate = DNA(n+1) + diphosphate. It catalyses the reaction Endonucleolytic cleavage to 5'-phosphomonoester.. Functionally, capsid protein (CA) is the structural component of the virus-like particle (VLP), forming the shell that encapsulates the retrotransposons dimeric RNA genome. The particles are assembled from trimer-clustered units and there are holes in the capsid shells that allow for the diffusion of macromolecules. CA also has nucleocapsid-like chaperone activity, promoting primer tRNA(i)-Met annealing to the multipartite primer-binding site (PBS), dimerization of Ty2 RNA and initiation of reverse transcription. In terms of biological role, the aspartyl protease (PR) mediates the proteolytic cleavages of the Gag and Gag-Pol polyproteins after assembly of the VLP. Its function is as follows. Reverse transcriptase/ribonuclease H (RT) is a multifunctional enzyme that catalyzes the conversion of the retro-elements RNA genome into dsDNA within the VLP. The enzyme displays a DNA polymerase activity that can copy either DNA or RNA templates, and a ribonuclease H (RNase H) activity that cleaves the RNA strand of RNA-DNA heteroduplexes during plus-strand synthesis and hydrolyzes RNA primers. The conversion leads to a linear dsDNA copy of the retrotransposon that includes long terminal repeats (LTRs) at both ends. Integrase (IN) targets the VLP to the nucleus, where a subparticle preintegration complex (PIC) containing at least integrase and the newly synthesized dsDNA copy of the retrotransposon must transit the nuclear membrane. Once in the nucleus, integrase performs the integration of the dsDNA into the host genome. In Saccharomyces cerevisiae (strain ATCC 204508 / S288c) (Baker's yeast), this protein is Transposon Ty2-GR1 Gag-Pol polyprotein (TY2B-GR1).